The following is a 279-amino-acid chain: ATP-dependent Clp protease proteolytic subunit-related protein 2, chloroplastic (279 aa).

Residues 1 to 54 (MAVSFNTTLHQPSLSPSCSIKLYSGLKPQSASFLASGYQNLNKEFYGRVYKSLQ) constitute a chloroplast transit peptide.

It belongs to the peptidase S14 family. In terms of assembly, component of the chloroplastic Clp protease core complex which consist of at least 16 proteins: CLPP4 (3 copies), CLPP5 (3 copies), CLPR4 (2 copies), ClpP1 (1 copy), CLPP6 (1 copy), CLPR2 (1 copy), CLPT1 (1 copy), CLPT2 (1 copy) and 3 copies of CLPP3 and/or CLPR1 and/or CLPR3. The core complex is organized in two heptameric rings, one containing CLPP3,4,5,6 in a 1:2:3:1 ratio and the other CLPP1 and CLPR1,2,3,4 in a 3:1:1:1:1 ratio. In terms of tissue distribution, expressed at least in leaves and roots.

It localises to the plastid. Its subcellular location is the chloroplast. Functionally, required for chloroplast development and integrity. Involved in the regulation of plastoglobules formation. The protein is ATP-dependent Clp protease proteolytic subunit-related protein 2, chloroplastic of Arabidopsis thaliana (Mouse-ear cress).